The sequence spans 59 residues: uncharacterized protein (59 aa).

2 stretches are compositionally biased toward basic and acidic residues: residues 1–23 and 36–45; these read MAEH…DAGR and DPQRASEAGK. Residues 1–59 are disordered; the sequence is MAEHRGGSGNFAEDREKASDAGRKGGQHSGGNFKNDPQRASEAGKKGGQQSGGNKSGKS. Residues 46-59 show a composition bias toward gly residues; that stretch reads KGGQQSGGNKSGKS.

It belongs to the con-10 family.

This is an uncharacterized protein from Escherichia coli (strain K12).